Reading from the N-terminus, the 385-residue chain is Isocitrate dehydrogenase [NAD] subunit beta, mitochondrial (385 aa).

A mitochondrion-targeting transit peptide spans 1 to 34 (MAALSGVRWLTRALVSAGNPGAWRGLSTSAAAHA). At lysine 199 the chain carries N6-acetyllysine.

Belongs to the isocitrate and isopropylmalate dehydrogenases family. Heterooligomer of subunits alpha (IDH3A), beta (IDH3B), and gamma (IDH3G) in the apparent ratio of 2:1:1. The heterodimer containing one IDH3A and one IDH3B subunit and the heterodimer containing one IDH3A and one IDH3G subunit assemble into a heterotetramer (which contains two subunits of IDH3A, one of IDH3B and one of IDH3G) and further into the heterooctamer.

It localises to the mitochondrion. The heterotetramer and the heterodimer composed of IDH3A and IDH3G subunits can be allosterically activated by citrate (CIT) or/and ADP, and the two activators can act independently or synergistically. The heterodimer composed of IDH3A and IDH3B subunits cannot be allosterically regulated and the allosteric regulation of the heterotetramer is through the IDH3G subunit and not the IDH3B subunit. The IDH3G subunit contains the allosteric site which consists of a CIT-binding site and an ADP-binding site, and the binding of CIT and ADP causes conformational changes at the allosteric site which are transmitted to the active site in the catalytic subunit (IDH3A) through a cascade of conformational changes at the heterodimer interface, leading to stabilization of the isocitrate-binding at the active site and thus activation of the enzyme. ATP can activate the heterotetramer and the heterodimer composed of IDH3A and IDH3G subunits at low concentrations but inhibits their activities at high concentrations, whereas ATP exhibits only inhibitory effect on the heterodimer composed of IDH3A and IDH3B subunits. In terms of biological role, plays a structural role to facilitate the assembly and ensure the full activity of the enzyme catalyzing the decarboxylation of isocitrate (ICT) into alpha-ketoglutarate. The heterodimer composed of the alpha (IDH3A) and beta (IDH3B) subunits and the heterodimer composed of the alpha (IDH3A) and gamma (IDH3G) subunits, have considerable basal activity but the full activity of the heterotetramer (containing two subunits of IDH3A, one of IDH3B and one of IDH3G) requires the assembly and cooperative function of both heterodimers. The chain is Isocitrate dehydrogenase [NAD] subunit beta, mitochondrial (IDH3B) from Homo sapiens (Human).